Reading from the N-terminus, the 239-residue chain is 4-hydroxy-tetrahydrodipicolinate reductase (239 aa).

Residues 12–17 (GASGRM), 94–96 (GTT), and 118–121 (ASNF) each bind NAD(+). H150 functions as the Proton donor/acceptor in the catalytic mechanism. H151 provides a ligand contact to (S)-2,3,4,5-tetrahydrodipicolinate. The Proton donor role is filled by K154. 160–161 (GT) serves as a coordination point for (S)-2,3,4,5-tetrahydrodipicolinate.

This sequence belongs to the DapB family.

The protein localises to the cytoplasm. The catalysed reaction is (S)-2,3,4,5-tetrahydrodipicolinate + NAD(+) + H2O = (2S,4S)-4-hydroxy-2,3,4,5-tetrahydrodipicolinate + NADH + H(+). It catalyses the reaction (S)-2,3,4,5-tetrahydrodipicolinate + NADP(+) + H2O = (2S,4S)-4-hydroxy-2,3,4,5-tetrahydrodipicolinate + NADPH + H(+). It functions in the pathway amino-acid biosynthesis; L-lysine biosynthesis via DAP pathway; (S)-tetrahydrodipicolinate from L-aspartate: step 4/4. Functionally, catalyzes the conversion of 4-hydroxy-tetrahydrodipicolinate (HTPA) to tetrahydrodipicolinate. This Stenotrophomonas maltophilia (strain K279a) protein is 4-hydroxy-tetrahydrodipicolinate reductase.